A 59-amino-acid polypeptide reads, in one-letter code: Large ribosomal subunit protein bL32 (59 aa).

The interval 1 to 59 (MAVQQNKKSPSKRGMHRSHDFLTTSPLAVEPSTGEVHLRHHISPNGYYRGKKVVKTKND) is disordered. Residues 49-59 (RGKKVVKTKND) show a composition bias toward basic residues.

Belongs to the bacterial ribosomal protein bL32 family.

The chain is Large ribosomal subunit protein bL32 from Burkholderia mallei (strain NCTC 10247).